A 344-amino-acid polypeptide reads, in one-letter code: L-threonine 3-dehydrogenase (344 aa).

A Zn(2+)-binding site is contributed by Cys42. Catalysis depends on charge relay system residues Thr44 and His47. Residues His67, Glu68, Cys97, Cys100, Cys103, and Cys111 each coordinate Zn(2+). Residues Ile179, Asp199, Arg204, 266–268 (LGI), and 290–291 (IY) each bind NAD(+).

This sequence belongs to the zinc-containing alcohol dehydrogenase family. As to quaternary structure, homotetramer. Requires Zn(2+) as cofactor.

It is found in the cytoplasm. The catalysed reaction is L-threonine + NAD(+) = (2S)-2-amino-3-oxobutanoate + NADH + H(+). The protein operates within amino-acid degradation; L-threonine degradation via oxydo-reductase pathway; glycine from L-threonine: step 1/2. Catalyzes the NAD(+)-dependent oxidation of L-threonine to 2-amino-3-ketobutyrate. The polypeptide is L-threonine 3-dehydrogenase (Sinorhizobium medicae (strain WSM419) (Ensifer medicae)).